A 205-amino-acid chain; its full sequence is Variable small protein 11 (205 aa).

Positions 1-18 (MRKRISAIIMTLFMVFMS) are cleaved as a signal peptide. A lipid anchor (N-palmitoyl cysteine) is attached at Cys-19. Cys-19 is lipidated: S-diacylglycerol cysteine.

It belongs to the variable small protein (Vsp) family.

The protein resides in the cell outer membrane. The Vlp and Vsp proteins are antigenically distinct proteins, only one vlp or vsp gene is transcriptionally active at any one time. Switching between these genes is a mechanism of host immune response evasion. The sequence is that of Variable small protein 11 from Borrelia hermsii.